A 175-amino-acid polypeptide reads, in one-letter code: Large ribosomal subunit protein uL10 (175 aa).

The protein belongs to the universal ribosomal protein uL10 family. In terms of assembly, part of the ribosomal stalk of the 50S ribosomal subunit. The N-terminus interacts with L11 and the large rRNA to form the base of the stalk. The C-terminus forms an elongated spine to which L12 dimers bind in a sequential fashion forming a multimeric L10(L12)X complex.

Functionally, forms part of the ribosomal stalk, playing a central role in the interaction of the ribosome with GTP-bound translation factors. This chain is Large ribosomal subunit protein uL10, found in Methylobacterium nodulans (strain LMG 21967 / CNCM I-2342 / ORS 2060).